The sequence spans 341 residues: S-adenosylmethionine:tRNA ribosyltransferase-isomerase (341 aa).

The protein belongs to the QueA family. As to quaternary structure, monomer.

It localises to the cytoplasm. The catalysed reaction is 7-aminomethyl-7-carbaguanosine(34) in tRNA + S-adenosyl-L-methionine = epoxyqueuosine(34) in tRNA + adenine + L-methionine + 2 H(+). The protein operates within tRNA modification; tRNA-queuosine biosynthesis. In terms of biological role, transfers and isomerizes the ribose moiety from AdoMet to the 7-aminomethyl group of 7-deazaguanine (preQ1-tRNA) to give epoxyqueuosine (oQ-tRNA). The polypeptide is S-adenosylmethionine:tRNA ribosyltransferase-isomerase (Staphylococcus aureus (strain USA300)).